Here is a 423-residue protein sequence, read N- to C-terminus: Gamma-glutamyl phosphate reductase (423 aa).

It belongs to the gamma-glutamyl phosphate reductase family.

It localises to the cytoplasm. The catalysed reaction is L-glutamate 5-semialdehyde + phosphate + NADP(+) = L-glutamyl 5-phosphate + NADPH + H(+). It participates in amino-acid biosynthesis; L-proline biosynthesis; L-glutamate 5-semialdehyde from L-glutamate: step 2/2. Catalyzes the NADPH-dependent reduction of L-glutamate 5-phosphate into L-glutamate 5-semialdehyde and phosphate. The product spontaneously undergoes cyclization to form 1-pyrroline-5-carboxylate. The chain is Gamma-glutamyl phosphate reductase from Magnetococcus marinus (strain ATCC BAA-1437 / JCM 17883 / MC-1).